Here is a 209-residue protein sequence, read N- to C-terminus: Protein Sxy (209 aa).

The protein belongs to the Sxy/TfoX family.

Induces low levels of natural DNA uptake by inducing transcription of the competence genes (the CRP-S regulon) required for DNA transformation. Induction of the CRP-S regulon also requires Sxy-activated promoter (CRP-S), cAMP receptor protein (CRP) and cAMP. Induces CRP-S site-containing genes which are involved in genome maintenance and transcription or encoding transposases and toxin-antitoxin pairs. The chain is Protein Sxy from Escherichia coli (strain K12).